Here is a 283-residue protein sequence, read N- to C-terminus: NFU1 iron-sulfur cluster scaffold homolog, mitochondrial (283 aa).

The transit peptide at 1–65 (MSKFLSQAAI…ELRMPVACRR (65 aa)) directs the protein to the mitochondrion. Residues 182–250 (IKELLDTRIR…IPEVESVEQV (69 aa)) form a nifU region. C219 and C222 together coordinate [4Fe-4S] cluster.

The protein belongs to the NifU family.

Its subcellular location is the mitochondrion. Molecular scaffold for [Fe-S] cluster assembly of mitochondrial iron-sulfur proteins. The chain is NFU1 iron-sulfur cluster scaffold homolog, mitochondrial from Drosophila sechellia (Fruit fly).